We begin with the raw amino-acid sequence, 178 residues long: Large ribosomal subunit protein uL6 (178 aa).

This sequence belongs to the universal ribosomal protein uL6 family. In terms of assembly, part of the 50S ribosomal subunit.

Functionally, this protein binds to the 23S rRNA, and is important in its secondary structure. It is located near the subunit interface in the base of the L7/L12 stalk, and near the tRNA binding site of the peptidyltransferase center. The protein is Large ribosomal subunit protein uL6 of Streptococcus thermophilus (strain CNRZ 1066).